A 261-amino-acid polypeptide reads, in one-letter code: Cytochrome c oxidase subunit 3 (261 aa).

Residues 1-15 are Mitochondrial matrix-facing; sequence MTHQTHAYHMVNPSP. A helical membrane pass occupies residues 16–34; the sequence is WPLTGALSALLMTSGLIMW. Over 35–40 the chain is Mitochondrial intermembrane; that stretch reads FHFNST. Residues 41 to 66 traverse the membrane as a helical segment; sequence ILLMLGLTTNMLTMYQWWRDIIREST. The Mitochondrial matrix portion of the chain corresponds to 67-72; sequence FQGHHT. Residues 73–105 form a helical membrane-spanning segment; sequence PTVQKGLRYGMILFIISEVLFFTGFFWAFYHSS. At 106–128 the chain is on the mitochondrial intermembrane side; sequence LAPTPELGGCWPPTGIHPLNPLE. Residues 129-152 form a helical membrane-spanning segment; sequence VPLLNTSVLLASGVSITWAHHSLM. Over 153-155 the chain is Mitochondrial matrix; the sequence is EGN. The chain crosses the membrane as a helical span at residues 156–183; sequence RNHMLQALFITIALGVYFTLLQASEYYE. The Mitochondrial intermembrane portion of the chain corresponds to 184–190; the sequence is APFTISD. A helical transmembrane segment spans residues 191-223; the sequence is GVYGSTFFVATGFHGLHVIIGSTFLIVCFFRQL. The Mitochondrial matrix segment spans residues 224–232; that stretch reads KFHFTSSHH. The helical transmembrane segment at 233-256 threads the bilayer; sequence FGFEAAAWYWHFVDVVWLFLYVSI. Residues 257–261 are Mitochondrial intermembrane-facing; it reads YWWGS.

It belongs to the cytochrome c oxidase subunit 3 family. Component of the cytochrome c oxidase (complex IV, CIV), a multisubunit enzyme composed of 14 subunits. The complex is composed of a catalytic core of 3 subunits MT-CO1, MT-CO2 and MT-CO3, encoded in the mitochondrial DNA, and 11 supernumerary subunits COX4I, COX5A, COX5B, COX6A, COX6B, COX6C, COX7A, COX7B, COX7C, COX8 and NDUFA4, which are encoded in the nuclear genome. The complex exists as a monomer or a dimer and forms supercomplexes (SCs) in the inner mitochondrial membrane with NADH-ubiquinone oxidoreductase (complex I, CI) and ubiquinol-cytochrome c oxidoreductase (cytochrome b-c1 complex, complex III, CIII), resulting in different assemblies (supercomplex SCI(1)III(2)IV(1) and megacomplex MCI(2)III(2)IV(2)).

It localises to the mitochondrion inner membrane. It catalyses the reaction 4 Fe(II)-[cytochrome c] + O2 + 8 H(+)(in) = 4 Fe(III)-[cytochrome c] + 2 H2O + 4 H(+)(out). Its function is as follows. Component of the cytochrome c oxidase, the last enzyme in the mitochondrial electron transport chain which drives oxidative phosphorylation. The respiratory chain contains 3 multisubunit complexes succinate dehydrogenase (complex II, CII), ubiquinol-cytochrome c oxidoreductase (cytochrome b-c1 complex, complex III, CIII) and cytochrome c oxidase (complex IV, CIV), that cooperate to transfer electrons derived from NADH and succinate to molecular oxygen, creating an electrochemical gradient over the inner membrane that drives transmembrane transport and the ATP synthase. Cytochrome c oxidase is the component of the respiratory chain that catalyzes the reduction of oxygen to water. Electrons originating from reduced cytochrome c in the intermembrane space (IMS) are transferred via the dinuclear copper A center (CU(A)) of subunit 2 and heme A of subunit 1 to the active site in subunit 1, a binuclear center (BNC) formed by heme A3 and copper B (CU(B)). The BNC reduces molecular oxygen to 2 water molecules using 4 electrons from cytochrome c in the IMS and 4 protons from the mitochondrial matrix. The chain is Cytochrome c oxidase subunit 3 (MT-CO3) from Aepyceros melampus (Impala).